A 455-amino-acid polypeptide reads, in one-letter code: Bifunctional protein GlmU (455 aa).

A pyrophosphorylase region spans residues 1–227 (MKLKAIILAA…YEEIMAVNSR (227 aa)). Residues 8-11 (LAAG), Lys-22, Gln-72, and 77-78 (GT) contribute to the UDP-N-acetyl-alpha-D-glucosamine site. Asp-100 contacts Mg(2+). Positions 137, 152, 167, and 225 each coordinate UDP-N-acetyl-alpha-D-glucosamine. Asn-225 is a binding site for Mg(2+). Positions 228-248 (EQLADVEAIMRRRIAKKHMAN) are linker. The segment at 249-455 (GVTIMNPEHV…WTKRKGLLKK (207 aa)) is N-acetyltransferase. Residues Arg-330 and Lys-348 each contribute to the UDP-N-acetyl-alpha-D-glucosamine site. His-360 serves as the catalytic Proton acceptor. Residues Tyr-363 and Asn-374 each contribute to the UDP-N-acetyl-alpha-D-glucosamine site. Acetyl-CoA-binding positions include 383 to 384 (NY), Ser-402, Cys-420, and Arg-437.

This sequence in the N-terminal section; belongs to the N-acetylglucosamine-1-phosphate uridyltransferase family. The protein in the C-terminal section; belongs to the transferase hexapeptide repeat family. Homotrimer. Requires Mg(2+) as cofactor.

It localises to the cytoplasm. It carries out the reaction alpha-D-glucosamine 1-phosphate + acetyl-CoA = N-acetyl-alpha-D-glucosamine 1-phosphate + CoA + H(+). It catalyses the reaction N-acetyl-alpha-D-glucosamine 1-phosphate + UTP + H(+) = UDP-N-acetyl-alpha-D-glucosamine + diphosphate. It participates in nucleotide-sugar biosynthesis; UDP-N-acetyl-alpha-D-glucosamine biosynthesis; N-acetyl-alpha-D-glucosamine 1-phosphate from alpha-D-glucosamine 6-phosphate (route II): step 2/2. It functions in the pathway nucleotide-sugar biosynthesis; UDP-N-acetyl-alpha-D-glucosamine biosynthesis; UDP-N-acetyl-alpha-D-glucosamine from N-acetyl-alpha-D-glucosamine 1-phosphate: step 1/1. The protein operates within bacterial outer membrane biogenesis; LPS lipid A biosynthesis. Functionally, catalyzes the last two sequential reactions in the de novo biosynthetic pathway for UDP-N-acetylglucosamine (UDP-GlcNAc). The C-terminal domain catalyzes the transfer of acetyl group from acetyl coenzyme A to glucosamine-1-phosphate (GlcN-1-P) to produce N-acetylglucosamine-1-phosphate (GlcNAc-1-P), which is converted into UDP-GlcNAc by the transfer of uridine 5-monophosphate (from uridine 5-triphosphate), a reaction catalyzed by the N-terminal domain. This Alkaliphilus oremlandii (strain OhILAs) (Clostridium oremlandii (strain OhILAs)) protein is Bifunctional protein GlmU.